Consider the following 592-residue polypeptide: Aspartate--tRNA ligase (592 aa).

L-aspartate is bound at residue Glu180. The segment at 204-207 is aspartate; sequence QLFK. L-aspartate is bound at residue Arg226. Residues 226–228 and Gln235 contribute to the ATP site; that span reads RDE. His455 is a binding site for L-aspartate. Glu489 serves as a coordination point for ATP. Residue Arg496 participates in L-aspartate binding. 541–544 is an ATP binding site; that stretch reads GFDR.

Belongs to the class-II aminoacyl-tRNA synthetase family. Type 1 subfamily. Homodimer.

The protein localises to the cytoplasm. The catalysed reaction is tRNA(Asp) + L-aspartate + ATP = L-aspartyl-tRNA(Asp) + AMP + diphosphate. Functionally, catalyzes the attachment of L-aspartate to tRNA(Asp) in a two-step reaction: L-aspartate is first activated by ATP to form Asp-AMP and then transferred to the acceptor end of tRNA(Asp). This is Aspartate--tRNA ligase from Clostridium tetani (strain Massachusetts / E88).